Consider the following 543-residue polypeptide: MTRYIFVTGGVVSSLGKGIASASLAAILEARGLKVTMLKLDPYINVDPGTMSPFQHGEVFVTHDGAETDLDLGHYERFIRTTMTQNNNFTTGRVYEHVLRKERRGDYLGATIQVIPHITDEIKRRIIKGAGDADVALVEIGGTVGDIESQPFLEAIRQLRVEVGSKRAMLMHLTLVPYIATAGETKTKPTQHSVKELRSIGLQPDVLICRSDHPVDVSSRRKIALFTNVEERAVISLEDVDTIYKIPAVLHAQGLDDFVVERFGLQCNGADLSEWEKVVDAKLNPEHEVTIAMVGKYMELLDAYKSLIEAMSHAGITNRTKVNLRYIDSEDIENQGTALLEGVDAILVPGGFGLRGVEGKITAVQYARENKVPYLGICLGMQVAVIEFARNVLGWKDANSTEFDRASGHPVVGLITEWEDATGAVEVRTEASDLGGTMRLGAQECLLEAGSKVHDCYGKDVIVERHRHRYEVNNNLLPQIIEAGLKISGRSSDAALVEVVEAPDHPWFVACQFHPEFTSTPRDGHPLFSGFVKAALAQHQKKA.

Positions 1 to 265 are amidoligase domain; the sequence is MTRYIFVTGG…DDFVVERFGL (265 aa). S13 contributes to the CTP binding site. S13 contributes to the UTP binding site. Residues 14–19 and D71 contribute to the ATP site; that span reads SLGKGI. D71 and E139 together coordinate Mg(2+). CTP-binding positions include 146–148, 186–191, and K222; these read DIE and KTKPTQ. UTP contacts are provided by residues 186–191 and K222; that span reads KTKPTQ. A Glutamine amidotransferase type-1 domain is found at 290-541; sequence TIAMVGKYME…VKAALAQHQK (252 aa). Residue G351 participates in L-glutamine binding. The active-site Nucleophile; for glutamine hydrolysis is the C378. L-glutamine-binding positions include 379–382, E402, and R469; that span reads LGMQ. Catalysis depends on residues H514 and E516.

It belongs to the CTP synthase family. In terms of assembly, homotetramer.

It carries out the reaction UTP + L-glutamine + ATP + H2O = CTP + L-glutamate + ADP + phosphate + 2 H(+). It catalyses the reaction L-glutamine + H2O = L-glutamate + NH4(+). The catalysed reaction is UTP + NH4(+) + ATP = CTP + ADP + phosphate + 2 H(+). It participates in pyrimidine metabolism; CTP biosynthesis via de novo pathway; CTP from UDP: step 2/2. With respect to regulation, allosterically activated by GTP, when glutamine is the substrate; GTP has no effect on the reaction when ammonia is the substrate. The allosteric effector GTP functions by stabilizing the protein conformation that binds the tetrahedral intermediate(s) formed during glutamine hydrolysis. Inhibited by the product CTP, via allosteric rather than competitive inhibition. In terms of biological role, catalyzes the ATP-dependent amination of UTP to CTP with either L-glutamine or ammonia as the source of nitrogen. Regulates intracellular CTP levels through interactions with the four ribonucleotide triphosphates. This is CTP synthase from Pseudomonas fluorescens (strain Pf0-1).